The following is a 490-amino-acid chain: 2,3-bisphosphoglycerate-independent phosphoglycerate mutase (490 aa).

Mn(2+) contacts are provided by Asp9 and Ser59. Ser59 functions as the Phosphoserine intermediate in the catalytic mechanism. Substrate is bound by residues His116, 145–146 (RD), Arg175, Arg181, 246–249 (RSDR), and Lys319. Residues Asp385, His389, Asp426, His427, and His444 each contribute to the Mn(2+) site.

The protein belongs to the BPG-independent phosphoglycerate mutase family. In terms of assembly, monomer. The cofactor is Mn(2+).

It carries out the reaction (2R)-2-phosphoglycerate = (2R)-3-phosphoglycerate. Its pathway is carbohydrate degradation; glycolysis; pyruvate from D-glyceraldehyde 3-phosphate: step 3/5. Its function is as follows. Catalyzes the interconversion of 2-phosphoglycerate and 3-phosphoglycerate. In Helicobacter hepaticus (strain ATCC 51449 / 3B1), this protein is 2,3-bisphosphoglycerate-independent phosphoglycerate mutase.